We begin with the raw amino-acid sequence, 143 residues long: Ribosome maturation factor RimP (143 aa).

It belongs to the RimP family.

It is found in the cytoplasm. Functionally, required for maturation of 30S ribosomal subunits. This chain is Ribosome maturation factor RimP, found in Borrelia hermsii (strain HS1 / DAH).